The sequence spans 431 residues: Histidinol dehydrogenase (431 aa).

Tyr127, Gln185, and Asn208 together coordinate NAD(+). Residues Ser234, Gln256, and His259 each contribute to the substrate site. Positions 256 and 259 each coordinate Zn(2+). Residues Glu323 and His324 each act as proton acceptor in the active site. His324, Asp357, Glu411, and His416 together coordinate substrate. A Zn(2+)-binding site is contributed by Asp357. His416 is a Zn(2+) binding site.

Belongs to the histidinol dehydrogenase family. It depends on Zn(2+) as a cofactor.

The enzyme catalyses L-histidinol + 2 NAD(+) + H2O = L-histidine + 2 NADH + 3 H(+). The protein operates within amino-acid biosynthesis; L-histidine biosynthesis; L-histidine from 5-phospho-alpha-D-ribose 1-diphosphate: step 9/9. In terms of biological role, catalyzes the sequential NAD-dependent oxidations of L-histidinol to L-histidinaldehyde and then to L-histidine. The protein is Histidinol dehydrogenase of Vibrio parahaemolyticus serotype O3:K6 (strain RIMD 2210633).